A 189-amino-acid polypeptide reads, in one-letter code: dCTP deaminase (189 aa).

DCTP-binding positions include 112 to 117 (KSTYAR), 136 to 138 (TLE), glutamine 157, tyrosine 171, and glutamine 181. Glutamate 138 functions as the Proton donor/acceptor in the catalytic mechanism.

This sequence belongs to the dCTP deaminase family. Homotrimer.

The enzyme catalyses dCTP + H2O + H(+) = dUTP + NH4(+). The protein operates within pyrimidine metabolism; dUMP biosynthesis; dUMP from dCTP (dUTP route): step 1/2. Its function is as follows. Catalyzes the deamination of dCTP to dUTP. In Paraburkholderia phymatum (strain DSM 17167 / CIP 108236 / LMG 21445 / STM815) (Burkholderia phymatum), this protein is dCTP deaminase.